Reading from the N-terminus, the 313-residue chain is Porphobilinogen deaminase (313 aa).

Cysteine 249 carries the S-(dipyrrolylmethanemethyl)cysteine modification.

The protein belongs to the HMBS family. In terms of assembly, monomer. Requires dipyrromethane as cofactor.

The catalysed reaction is 4 porphobilinogen + H2O = hydroxymethylbilane + 4 NH4(+). It participates in porphyrin-containing compound metabolism; protoporphyrin-IX biosynthesis; coproporphyrinogen-III from 5-aminolevulinate: step 2/4. Its function is as follows. Tetrapolymerization of the monopyrrole PBG into the hydroxymethylbilane pre-uroporphyrinogen in several discrete steps. The sequence is that of Porphobilinogen deaminase from Paracoccus denitrificans (strain Pd 1222).